The primary structure comprises 289 residues: Glyoxylate/succinic semialdehyde reductase 1 (289 aa).

The residue at position 1 (M1) is an N-acetylmethionine. NADP(+) is bound by residues 4–18 (GFLG…MSMN) and T95. The active site involves K170. NADP(+) is bound at residue K238.

Belongs to the HIBADH-related family. NP60 subfamily.

It is found in the cytoplasm. Its subcellular location is the cytosol. It catalyses the reaction glycolate + NADP(+) = glyoxylate + NADPH + H(+). It carries out the reaction 4-hydroxybutanoate + NADP(+) = succinate semialdehyde + NADPH + H(+). Its activity is regulated as follows. The ratio of NADPH/NADP(+) may regulate enzymatic activity. Catalyzes the NADPH-dependent reduction of glyoxylate to glycolate as well as succinic semialdehyde (SSA) to gamma-hydroxybutyrate in vitro. May function in redox homeostasis and play a role in oxidative stress tolerance by detoxifying glyoxylate and SSA generated in glycolate metabolism and GABA metabolism, respectively. The protein is Glyoxylate/succinic semialdehyde reductase 1 (GLYR1) of Arabidopsis thaliana (Mouse-ear cress).